The sequence spans 474 residues: Aspartyl/glutamyl-tRNA(Asn/Gln) amidotransferase subunit B (474 aa).

This sequence belongs to the GatB/GatE family. GatB subfamily. Heterotrimer of A, B and C subunits.

It catalyses the reaction L-glutamyl-tRNA(Gln) + L-glutamine + ATP + H2O = L-glutaminyl-tRNA(Gln) + L-glutamate + ADP + phosphate + H(+). The catalysed reaction is L-aspartyl-tRNA(Asn) + L-glutamine + ATP + H2O = L-asparaginyl-tRNA(Asn) + L-glutamate + ADP + phosphate + 2 H(+). Functionally, allows the formation of correctly charged Asn-tRNA(Asn) or Gln-tRNA(Gln) through the transamidation of misacylated Asp-tRNA(Asn) or Glu-tRNA(Gln) in organisms which lack either or both of asparaginyl-tRNA or glutaminyl-tRNA synthetases. The reaction takes place in the presence of glutamine and ATP through an activated phospho-Asp-tRNA(Asn) or phospho-Glu-tRNA(Gln). The polypeptide is Aspartyl/glutamyl-tRNA(Asn/Gln) amidotransferase subunit B (Campylobacter curvus (strain 525.92)).